Reading from the N-terminus, the 444-residue chain is Zinc finger protein ZIC 1 (444 aa).

The segment at L222–H257 adopts a C2H2-type 1 zinc-finger fold. The C2H2-type 2; degenerate zinc finger occupies E271–H293. 3 consecutive C2H2-type zinc fingers follow at residues F299–H323, F329–H353, and Y359–H381. The interval S372–H432 is disordered. Residues S383 to H432 are compositionally biased toward low complexity.

The protein belongs to the GLI C2H2-type zinc-finger protein family.

The protein localises to the nucleus. It is found in the cytoplasm. Acts as a transcriptional activator. Involved in neurogenesis. Plays important roles in the early stage of organogenesis of the CNS, as well as during dorsal spinal cord development and maturation of the cerebellum. Binds to the minimal GLI-consensus sequence 5'-TGGGTGGTC-3'. The sequence is that of Zinc finger protein ZIC 1 (ZIC1) from Gallus gallus (Chicken).